We begin with the raw amino-acid sequence, 1485 residues long: Sex-determining transformer protein 2 (1485 aa).

A signal peptide spans 1 to 28; sequence MSLRSNKLLVAAVIFTVVTFGLLLTSSI. The next 9 membrane-spanning stretches (helical) occupy residues 438–458, 490–510, 584–604, 732–752, 923–943, 950–970, 980–1000, 1033–1053, and 1063–1083; these read VVYF…FFAW, IELN…NTYL, WPFI…FVDI, GILL…VMLI, LLAS…FSIT, LIFS…ISLF, DSAV…LSLF, AQVF…AGVV, and TVIL…VLVA. Residues 1131 to 1271 form an interaction with fem-3 region; the sequence is DFHIRPTNMS…MLHMIEKVQK (141 aa). The tract at residues 1143 to 1175 is disordered; sequence YAPPPAKKRAKQTNNETDPEKKEDEPGTSNANN. The helical transmembrane segment at 1181–1201 threads the bilayer; sequence AAHRLAILPWHFVLGGIPVDL. Disordered stretches follow at residues 1228 to 1252, 1275 to 1306, and 1348 to 1384; these read SELE…PAPE, EKEA…PSHR, and EMPP…PPHP. The segment covering 1275-1284 has biased composition (basic and acidic residues); sequence EKEAKEKVHQ. The MX regulatory domain; required for tra-1 binding stretch occupies residues 1401–1422; the sequence is CEDVYWTYNDGRLPPNVAMPPR. Residues 1442-1485 are disordered; that stretch reads PPGQPSIPIPAEAMALREERARAHREQEQRDNSQSPSPSPEPGL. Over residues 1456–1472 the composition is skewed to basic and acidic residues; the sequence is ALREERARAHREQEQRD.

Interacts with tra-1 and fem-3. In terms of tissue distribution, somatic and germline tissues.

It is found in the membrane. Its function is as follows. Plays a major role in controlling sexual cell fates. Promotes female development in XX animals where it sequesters one or more of the FEM proteins to the membrane thereby freeing the tra-1 protein (a putative transcription factor) to enter the nucleus and promote female development. In XO animals it acts as a receptor for her-1 which prevents it from binding to FEM proteins thereby repressing the activity of tra-1. Negatively regulates male development when bound to fem-3 and is required together with tra-1 for promoting spermatogenesis. The chain is Sex-determining transformer protein 2 from Caenorhabditis remanei (Caenorhabditis vulgaris).